A 332-amino-acid chain; its full sequence is Beta-ketoacyl-[acyl-carrier-protein] synthase III (332 aa).

Residues C116 and H255 contribute to the active site. Residues 256-260 are ACP-binding; that stretch reads QANLR. Residue N285 is part of the active site.

The protein belongs to the thiolase-like superfamily. FabH family. Homodimer.

The protein localises to the cytoplasm. It carries out the reaction malonyl-[ACP] + acetyl-CoA + H(+) = 3-oxobutanoyl-[ACP] + CO2 + CoA. It functions in the pathway lipid metabolism; fatty acid biosynthesis. Catalyzes the condensation reaction of fatty acid synthesis by the addition to an acyl acceptor of two carbons from malonyl-ACP. Catalyzes the first condensation reaction which initiates fatty acid synthesis and may therefore play a role in governing the total rate of fatty acid production. Possesses both acetoacetyl-ACP synthase and acetyl transacylase activities. Its substrate specificity determines the biosynthesis of branched-chain and/or straight-chain of fatty acids. This Helicobacter hepaticus (strain ATCC 51449 / 3B1) protein is Beta-ketoacyl-[acyl-carrier-protein] synthase III.